We begin with the raw amino-acid sequence, 342 residues long: NADH-quinone oxidoreductase subunit H (342 aa).

8 helical membrane-spanning segments follow: residues 15-35 (LLII…LMVA), 86-106 (VLFI…WAVV), 119-139 (VGVL…IIAG), 159-179 (VSYE…VGSL), 190-210 (HVWF…SGLA), 251-271 (FMIC…PFDI), 277-297 (VPGP…FFWV), and 316-336 (VFLP…ELAG).

It belongs to the complex I subunit 1 family. NDH-1 is composed of 14 different subunits. Subunits NuoA, H, J, K, L, M, N constitute the membrane sector of the complex.

The protein localises to the cell inner membrane. It carries out the reaction a quinone + NADH + 5 H(+)(in) = a quinol + NAD(+) + 4 H(+)(out). Its function is as follows. NDH-1 shuttles electrons from NADH, via FMN and iron-sulfur (Fe-S) centers, to quinones in the respiratory chain. The immediate electron acceptor for the enzyme in this species is believed to be ubiquinone. Couples the redox reaction to proton translocation (for every two electrons transferred, four hydrogen ions are translocated across the cytoplasmic membrane), and thus conserves the redox energy in a proton gradient. This subunit may bind ubiquinone. This chain is NADH-quinone oxidoreductase subunit H, found in Granulibacter bethesdensis (strain ATCC BAA-1260 / CGDNIH1).